A 176-amino-acid polypeptide reads, in one-letter code: MTTIVSVRRNGHVVIAGDGQATLGNTVMKGNVKKVRRLYNDKVIAGFAGGTADAFTLFELFERKLEMHQGHLVKAAVELAKDWRTDRMLRKLEALLAVADETASLIITGNGDVVQPENDLIAIGSGGPYARAAARALLENTELGAREIAEKALDIAGDICIYTNHFHTIEELTAKA.

Residue T2 is part of the active site. The Na(+) site is built by G157, C160, and T163.

Belongs to the peptidase T1B family. HslV subfamily. As to quaternary structure, a double ring-shaped homohexamer of HslV is capped on each side by a ring-shaped HslU homohexamer. The assembly of the HslU/HslV complex is dependent on binding of ATP.

Its subcellular location is the cytoplasm. It catalyses the reaction ATP-dependent cleavage of peptide bonds with broad specificity.. With respect to regulation, allosterically activated by HslU binding. In terms of biological role, protease subunit of a proteasome-like degradation complex believed to be a general protein degrading machinery. The chain is ATP-dependent protease subunit HslV from Salmonella gallinarum (strain 287/91 / NCTC 13346).